Here is a 95-residue protein sequence, read N- to C-terminus: Large ribosomal subunit protein uL23 (95 aa).

This sequence belongs to the universal ribosomal protein uL23 family. Part of the 50S ribosomal subunit. Contacts protein L29, and trigger factor when it is bound to the ribosome.

One of the early assembly proteins it binds 23S rRNA. One of the proteins that surrounds the polypeptide exit tunnel on the outside of the ribosome. Forms the main docking site for trigger factor binding to the ribosome. This Syntrophotalea carbinolica (strain DSM 2380 / NBRC 103641 / GraBd1) (Pelobacter carbinolicus) protein is Large ribosomal subunit protein uL23.